A 738-amino-acid polypeptide reads, in one-letter code: Alcohol dehydrogenase (quinone), dehydrogenase subunit (738 aa).

An N-terminal signal peptide occupies residues 1–35; it reads MISAVFGKRRSLSRTLTAGTICAALISGYATMASA. Pyrroloquinoline quinone is bound at residue glutamate 97. The cysteines at positions 143 and 144 are disulfide-linked. Arginine 149 contacts pyrroloquinoline quinone. A Ca(2+)-binding site is contributed by glutamate 217. Pyrroloquinoline quinone is bound at residue threonine 278. Residues asparagine 298 and aspartate 343 each coordinate Ca(2+). Aspartate 343 functions as the Proton acceptor in the catalytic mechanism. Residues lysine 370 and isoleucine 584 each contribute to the pyrroloquinoline quinone site. The region spanning 634-738 is the Cytochrome c domain; that stretch reads FDSKRTDNGY…NADGIPEQLP (105 aa). 4 residues coordinate heme c: cysteine 650, cysteine 653, histidine 654, and methionine 693.

The protein belongs to the bacterial PQQ dehydrogenase family. As to quaternary structure, the alcohol dehydrogenase multicomponent enzyme system is composed of a dehydrogenase subunit I (AdhA) and a cytochrome c subunit II (AdhB). Requires pyrroloquinoline quinone as cofactor. The cofactor is Ca(2+). Heme c serves as cofactor.

It localises to the cell membrane. The enzyme catalyses ethanol + a ubiquinone = a ubiquinol + acetaldehyde. Dehydrogenase component of the alcohol dehydrogenase multicomponent enzyme system which is involved in the production of acetic acid and in the ethanol oxidase respiratory chain. Quinohemoprotein alcohol dehydrogenase (ADH) catalyzes the oxidation of ethanol to acetaldehyde by transferring electrons to the ubiquinone embedded in the membrane phospholipids. The electrons transfer from ethanol to membranous ubiquinone occurs from pyrroloquinoline quinone (PQQ) to one heme c in subunit I (AdhA), and finally to two heme c in subunit II (AdhB). Besides ubiquinone reduction, ADH also has a ubiquinol (QH2) oxidation reaction which mediates electron transfer from ubiquinol to the non-energy generating bypass oxidase system. The electrons transfer occurs from ubiquinol (QH2) to the additional heme c within subunit II (AdhB). This Gluconacetobacter polyoxogenes (Acetobacter polyoxogenes) protein is Alcohol dehydrogenase (quinone), dehydrogenase subunit (adhA).